A 217-amino-acid polypeptide reads, in one-letter code: N-(5'-phosphoribosyl)anthranilate isomerase (217 aa).

The protein belongs to the TrpF family.

It catalyses the reaction N-(5-phospho-beta-D-ribosyl)anthranilate = 1-(2-carboxyphenylamino)-1-deoxy-D-ribulose 5-phosphate. It functions in the pathway amino-acid biosynthesis; L-tryptophan biosynthesis; L-tryptophan from chorismate: step 3/5. This Chlorobium chlorochromatii (strain CaD3) protein is N-(5'-phosphoribosyl)anthranilate isomerase.